Here is a 114-residue protein sequence, read N- to C-terminus: MKERNISIKSKVEIQELFKKGRFIRIEGINVFYEFTCLAISRILVTFPRIFKGAVKRNRVRRIFKECFRKQFALLKDRYVDFIFVVYPQKADVNYHEVETILKNIVVYIMKRNM.

This sequence belongs to the RnpA family. Consists of a catalytic RNA component (M1 or rnpB) and a protein subunit.

It carries out the reaction Endonucleolytic cleavage of RNA, removing 5'-extranucleotides from tRNA precursor.. Its function is as follows. RNaseP catalyzes the removal of the 5'-leader sequence from pre-tRNA to produce the mature 5'-terminus. It can also cleave other RNA substrates such as 4.5S RNA. The protein component plays an auxiliary but essential role in vivo by binding to the 5'-leader sequence and broadening the substrate specificity of the ribozyme. The chain is Ribonuclease P protein component from Borrelia hermsii (strain HS1 / DAH).